We begin with the raw amino-acid sequence, 382 residues long: 4-hydroxybutyrate dehydrogenase (382 aa).

NAD(+) contacts are provided by residues Asp-37, Asn-67, 94–98, 138–142, and Lys-159; these read GSSID and TTSGT. Positions 193, 197, 261, and 280 each coordinate Fe cation. His-280 contacts NAD(+).

Belongs to the iron-containing alcohol dehydrogenase family. It depends on Fe cation as a cofactor.

It catalyses the reaction 4-hydroxybutanoate + NAD(+) = succinate semialdehyde + NADH + H(+). Shows competitive inhibition of GHBDH activity by the product succinic semialdehyde, and non-competitive inhibitions by the three other substrate-product combinations. The conversion of GHB to SSA is activated by two different saturating purified nudix hydrolases, B.methanolicus activator ACT and E.coli NudF. The nudix hydrolases do not activate the reverse reaction. Functionally, involved in the degradation of 4-hydroxybutyrate. Catalyzes the interconversion of gamma-hydroxybutyrate (GHB) and succinic semialdehyde (SSA). This is 4-hydroxybutyrate dehydrogenase from Cupriavidus necator (Alcaligenes eutrophus).